A 794-amino-acid chain; its full sequence is uncharacterized protein (794 aa).

The N-terminal stretch at 1-22 is a signal peptide; sequence MKLKYGTIIFSGLLGVSAILAA. C23 carries the N-palmitoyl cysteine lipid modification. The S-diacylglycerol cysteine moiety is linked to residue C23. Residues 177 to 196 show a composition bias toward polar residues; the sequence is SSGKTQVSQTSSGSNQQKTL. Disordered stretches follow at residues 177–208, 220–257, and 466–506; these read SSGK…SDSS, AKNN…DKKI, and KSTD…ENNS. Residues 220–231 show a composition bias toward low complexity; the sequence is AKNNGKKANNSK. Residues 238 to 250 are compositionally biased toward polar residues; that stretch reads DQSTQTHNDQGDA.

Belongs to the MG185/MG260 family.

The protein localises to the cell membrane. This is an uncharacterized protein from Mycoplasma pneumoniae (strain ATCC 29342 / M129 / Subtype 1) (Mycoplasmoides pneumoniae).